The chain runs to 434 residues: Histidinol dehydrogenase (434 aa).

The NAD(+) site is built by Tyr-130, Gln-188, and Asn-211. Ser-237, Gln-259, and His-262 together coordinate substrate. Positions 259 and 262 each coordinate Zn(2+). Residues Glu-326 and His-327 each act as proton acceptor in the active site. Residues His-327, Asp-360, Glu-414, and His-419 each contribute to the substrate site. Asp-360 is a binding site for Zn(2+). A Zn(2+)-binding site is contributed by His-419.

The protein belongs to the histidinol dehydrogenase family. Homodimer. The cofactor is Zn(2+).

It carries out the reaction L-histidinol + 2 NAD(+) + H2O = L-histidine + 2 NADH + 3 H(+). Its pathway is amino-acid biosynthesis; L-histidine biosynthesis; L-histidine from 5-phospho-alpha-D-ribose 1-diphosphate: step 9/9. Functionally, catalyzes the sequential NAD-dependent oxidations of L-histidinol to L-histidinaldehyde and then to L-histidine. The chain is Histidinol dehydrogenase from Salmonella typhi.